The following is a 779-amino-acid chain: Transcription factor SPT20 homolog (779 aa).

Serine 296 is modified (phosphoserine). 2 disordered regions span residues 373 to 392 (DEES…DHSN) and 420 to 507 (PVKM…IPRK). Residues 424-437 (SHSSSGSASLSQVS) show a composition bias toward low complexity. Positions 445-454 (TETVSVQSSV) are enriched in polar residues. The segment covering 470 to 479 (SSSGNSSSGN) has biased composition (low complexity). Phosphothreonine is present on threonine 494. Phosphoserine occurs at positions 519 and 524. 2 disordered regions span residues 641 to 677 (QLSQ…EQAL) and 755 to 779 (LHHH…TPKF). The segment covering 755–771 (LHHHRHTGSQSKSKMKR) has biased composition (basic residues).

This sequence belongs to the SPT20 family. In terms of assembly, interacts with MAPK14. Interacts with ATG9A. In terms of tissue distribution, highly expressed in testis, moderately in brain and pituitary gland. Expressed in several fetal tissues, including lung, brain, thymus and kidney. Expression is down-regulated in malignant prostate tissues.

The protein resides in the nucleus. Required for MAP kinase p38 (MAPK11, MAPK12, MAPK13 and/or MAPK14) activation during gastrulation. Required for down-regulation of E-cadherin during gastrulation by regulating E-cadherin protein level downstream from NCK-interacting kinase (NIK) and independently of the regulation of transcription by FGF signaling and Snail. Required for starvation-induced ATG9A trafficking during autophagy. This chain is Transcription factor SPT20 homolog (SUPT20H), found in Homo sapiens (Human).